The sequence spans 251 residues: Cell division protein ZapD (251 aa).

This sequence belongs to the ZapD family. In terms of assembly, interacts with FtsZ.

It is found in the cytoplasm. Cell division factor that enhances FtsZ-ring assembly. Directly interacts with FtsZ and promotes bundling of FtsZ protofilaments, with a reduction in FtsZ GTPase activity. The sequence is that of Cell division protein ZapD from Burkholderia mallei (strain NCTC 10247).